The primary structure comprises 158 residues: UPF0262 protein RHOS4_22360 (158 aa).

Belongs to the UPF0262 family.

The sequence is that of UPF0262 protein RHOS4_22360 from Cereibacter sphaeroides (strain ATCC 17023 / DSM 158 / JCM 6121 / CCUG 31486 / LMG 2827 / NBRC 12203 / NCIMB 8253 / ATH 2.4.1.) (Rhodobacter sphaeroides).